The sequence spans 281 residues: Ribonuclease HII (281 aa).

Residues 1–46 (MIRDTKQPIKVPAKPASRSGGKAKTVKPKTIKPKTSAKAAAAKPAS) are disordered. Residues 33–46 (PKTSAKAAAAKPAS) show a composition bias toward low complexity. The RNase H type-2 domain maps to 73 to 261 (WPIAGCDEAG…VAAAWQKIEG (189 aa)). A divalent metal cation is bound by residues D79, E80, and D170.

The protein belongs to the RNase HII family. Mn(2+) serves as cofactor. Mg(2+) is required as a cofactor.

The protein localises to the cytoplasm. It catalyses the reaction Endonucleolytic cleavage to 5'-phosphomonoester.. In terms of biological role, endonuclease that specifically degrades the RNA of RNA-DNA hybrids. This chain is Ribonuclease HII, found in Rhodopseudomonas palustris (strain TIE-1).